The primary structure comprises 291 residues: Bis(5'-nucleosyl)-tetraphosphatase, symmetrical (291 aa).

Belongs to the Ap4A hydrolase family.

It carries out the reaction P(1),P(4)-bis(5'-adenosyl) tetraphosphate + H2O = 2 ADP + 2 H(+). Its function is as follows. Hydrolyzes diadenosine 5',5'''-P1,P4-tetraphosphate to yield ADP. This Pseudomonas syringae pv. syringae (strain B728a) protein is Bis(5'-nucleosyl)-tetraphosphatase, symmetrical.